The chain runs to 236 residues: C-&gt;U-editing enzyme APOBEC-1 (236 aa).

The CMP/dCMP-type deaminase domain maps to 10–134; the sequence is KDYTLRRRIE…RRNRQGLKDL (125 aa). Zn(2+) is bound at residue H61. E63 functions as the Proton donor in the catalytic mechanism. Residues C93 and C96 each contribute to the Zn(2+) site.

It belongs to the cytidine and deoxycytidylate deaminase family. As to quaternary structure, homodimer. Interacts with A1CF; form an mRNA editing complex. Interacts with RBM47; form an mRNA editing complex. Found in a complex with CELF2/CUGBP2 and A1CF. Interacts with HNRPAB. Interacts with SYNCRIP. The cofactor is Zn(2+). Expressed exclusively in the intestine.

The protein resides in the cytoplasm. It localises to the nucleus. It carries out the reaction a cytidine in mRNA + H2O + H(+) = a uridine in mRNA + NH4(+). The enzyme catalyses cytidine(6666) in apoB mRNA + H2O + H(+) = uridine(6666) in apoB mRNA + NH4(+). Its function is as follows. Cytidine deaminase catalyzing the cytidine to uridine postranscriptional editing of a variety of mRNAs. Form complexes with cofactors that confer differential editing activity and selectivity. Responsible for the postranscriptional editing of a CAA codon for Gln to a UAA codon for stop in the apolipoprotein B mRNA. Also involved in CGA (Arg) to UGA (Stop) editing in the NF1 mRNA. May also play a role in the epigenetic regulation of gene expression by participating in DNA demethylation. The polypeptide is C-&gt;U-editing enzyme APOBEC-1 (Oryctolagus cuniculus (Rabbit)).